The sequence spans 147 residues: D-aminoacyl-tRNA deacylase (147 aa).

The short motif at 136-137 (GP) is the Gly-cisPro motif, important for rejection of L-amino acids element.

Belongs to the DTD family. In terms of assembly, homodimer.

The protein localises to the cytoplasm. The enzyme catalyses glycyl-tRNA(Ala) + H2O = tRNA(Ala) + glycine + H(+). The catalysed reaction is a D-aminoacyl-tRNA + H2O = a tRNA + a D-alpha-amino acid + H(+). In terms of biological role, an aminoacyl-tRNA editing enzyme that deacylates mischarged D-aminoacyl-tRNAs. Also deacylates mischarged glycyl-tRNA(Ala), protecting cells against glycine mischarging by AlaRS. Acts via tRNA-based rather than protein-based catalysis; rejects L-amino acids rather than detecting D-amino acids in the active site. By recycling D-aminoacyl-tRNA to D-amino acids and free tRNA molecules, this enzyme counteracts the toxicity associated with the formation of D-aminoacyl-tRNA entities in vivo and helps enforce protein L-homochirality. This chain is D-aminoacyl-tRNA deacylase, found in Streptococcus pneumoniae (strain Taiwan19F-14).